A 406-amino-acid chain; its full sequence is 11-beta-hydroxysteroid dehydrogenase type 2 (406 aa).

82-111 (TRAVLITGCDSGFGKETAKKLDAMGFTVLA) is a binding site for NAD(+). Ser-219 lines the substrate pocket. Tyr-232 functions as the Proton acceptor in the catalytic mechanism. Positions 379–406 (GQPGATPAPDTAQDNPNPNPDPSLVGAR) are disordered.

It belongs to the short-chain dehydrogenases/reductases (SDR) family. Interacts with ligand-free cytoplasmic NR3C2. As to expression, highly expressed in the kidney.

The protein resides in the microsome. It is found in the endoplasmic reticulum. The catalysed reaction is an 11beta-hydroxysteroid + NAD(+) = an 11-oxosteroid + NADH + H(+). The enzyme catalyses corticosterone + NAD(+) = 11-dehydrocorticosterone + NADH + H(+). It carries out the reaction cortisol + NAD(+) = cortisone + NADH + H(+). It catalyses the reaction 11beta,17beta-dihydroxyandrost-4-ene-3-one + NAD(+) = 17beta-hydroxyandrost-4-ene-3,11-dione + NADH + H(+). The catalysed reaction is 11beta-hydroxyandrost-4-ene-3,17-dione + NAD(+) = androst-4-ene-3,11,17-trione + NADH + H(+). It participates in steroid metabolism. With respect to regulation, inhibited by carbenoloxone. In terms of biological role, catalyzes the conversion of biologically active 11beta-hydroxyglucocorticoids (11beta-hydroxysteroid) such as corticosterone, to inactive 11-ketoglucocorticoids (11-oxosteroid) such as 11-dehydrocorticosterone, in the presence of NAD(+). Functions as a dehydrogenase (oxidase), thereby decreasing the concentration of active glucocorticoids, thus protecting the nonselective mineralocorticoid receptor from occupation by glucocorticoids. Plays an important role in maintaining glucocorticoids balance during preimplantation and protects the fetus from excessive maternal corticosterone exposure. Catalyzes the oxidation of 11beta-hydroxytestosterone (11beta,17beta-dihydroxyandrost-4-ene-3-one) to 11-ketotestosterone (17beta-hydroxyandrost-4-ene-3,11-dione), a major bioactive androgen. Catalyzes the conversion of 11beta-hydroxyandrostenedione (11beta-hydroxyandrost-4-ene-3,17-dione) to 11-ketoandrostenedione (androst-4-ene-3,11,17-trione), which can be further metabolized to 11-ketotestosterone. Converts 7-beta-25-dihydroxycholesterol to 7-oxo-25-hydroxycholesterol in vitro. 7-beta-25-dihydroxycholesterol (not 7-oxo-25-hydroxycholesterol) acts as a ligand for the G-protein-coupled receptor (GPCR) Epstein-Barr virus-induced gene 2 (EBI2) and may thereby regulate immune cell migration. May protect ovulating oocytes and fertilizing spermatozoa from the adverse effects of cortisol. The polypeptide is 11-beta-hydroxysteroid dehydrogenase type 2 (HSD11B2) (Oryctolagus cuniculus (Rabbit)).